Reading from the N-terminus, the 296-residue chain is Bifunctional protein FolD (296 aa).

NADP(+) contacts are provided by residues 166–168 (GRS), Ser195, and Thr236.

It belongs to the tetrahydrofolate dehydrogenase/cyclohydrolase family. Homodimer.

The enzyme catalyses (6R)-5,10-methylene-5,6,7,8-tetrahydrofolate + NADP(+) = (6R)-5,10-methenyltetrahydrofolate + NADPH. The catalysed reaction is (6R)-5,10-methenyltetrahydrofolate + H2O = (6R)-10-formyltetrahydrofolate + H(+). It functions in the pathway one-carbon metabolism; tetrahydrofolate interconversion. In terms of biological role, catalyzes the oxidation of 5,10-methylenetetrahydrofolate to 5,10-methenyltetrahydrofolate and then the hydrolysis of 5,10-methenyltetrahydrofolate to 10-formyltetrahydrofolate. This chain is Bifunctional protein FolD, found in Dehalococcoides mccartyi (strain ATCC BAA-2266 / KCTC 15142 / 195) (Dehalococcoides ethenogenes (strain 195)).